The following is a 216-amino-acid chain: Octanoyltransferase (216 aa).

The region spanning 33–212 is the BPL/LPL catalytic domain; the sequence is AHTPDELWLV…ILSNILGLTA (180 aa). Residues 72–79, 139–141, and 152–154 each bind substrate; these read RGGQVTYH, SLG, and GVA. Cys-170 serves as the catalytic Acyl-thioester intermediate.

The protein belongs to the LipB family.

The protein localises to the cytoplasm. It catalyses the reaction octanoyl-[ACP] + L-lysyl-[protein] = N(6)-octanoyl-L-lysyl-[protein] + holo-[ACP] + H(+). It participates in protein modification; protein lipoylation via endogenous pathway; protein N(6)-(lipoyl)lysine from octanoyl-[acyl-carrier-protein]: step 1/2. Catalyzes the transfer of endogenously produced octanoic acid from octanoyl-acyl-carrier-protein onto the lipoyl domains of lipoate-dependent enzymes. Lipoyl-ACP can also act as a substrate although octanoyl-ACP is likely to be the physiological substrate. The protein is Octanoyltransferase of Saccharophagus degradans (strain 2-40 / ATCC 43961 / DSM 17024).